The primary structure comprises 172 residues: uncharacterized protein (172 aa).

Residues 12–172 (IRLRCMEDRD…IAVYERKSYN (161 aa)) form the N-acetyltransferase domain.

This is an uncharacterized protein from Bacillus subtilis (strain 168).